Consider the following 419-residue polypeptide: L-rhamnose isomerase (419 aa).

Mn(2+) contacts are provided by H262, D294, and D296.

Belongs to the rhamnose isomerase family. In terms of assembly, homotetramer. Mn(2+) serves as cofactor.

It is found in the cytoplasm. It carries out the reaction L-rhamnopyranose = L-rhamnulose. It functions in the pathway carbohydrate degradation; L-rhamnose degradation; glycerone phosphate from L-rhamnose: step 1/3. Its function is as follows. Catalyzes the interconversion of L-rhamnose and L-rhamnulose. In Escherichia coli O17:K52:H18 (strain UMN026 / ExPEC), this protein is L-rhamnose isomerase.